Consider the following 217-residue polypeptide: Probable GTP-binding protein EngB (217 aa).

An EngB-type G domain is found at 37–214; the sequence is SGLEVAFAGR…RAAMARLIGD (178 aa). GTP contacts are provided by residues 45–52, 72–76, 92–95, 159–162, and 193–195; these read GRSNVGKS, GRTQE, DMPG, TKAD, and TSS. Positions 52 and 74 each coordinate Mg(2+).

It belongs to the TRAFAC class TrmE-Era-EngA-EngB-Septin-like GTPase superfamily. EngB GTPase family. Requires Mg(2+) as cofactor.

Necessary for normal cell division and for the maintenance of normal septation. In Nitrobacter winogradskyi (strain ATCC 25391 / DSM 10237 / CIP 104748 / NCIMB 11846 / Nb-255), this protein is Probable GTP-binding protein EngB.